We begin with the raw amino-acid sequence, 190 residues long: Vascular endothelial growth factor A (190 aa).

Residues Met1–Ala26 form the signal peptide. 3 cysteine pairs are disulfide-bonded: Cys51–Cys93, Cys82–Cys127, and Cys86–Cys129. An N-linked (GlcNAc...) asparagine glycan is attached at Asn100.

This sequence belongs to the PDGF/VEGF growth factor family. As to quaternary structure, homodimer; disulfide-linked. Also found as heterodimer with PGF. Interacts with NRP1. Interacts with BSG. Interacts with CD82; this interaction inhibits VEGFA-mediated signaling pathway.

It localises to the secreted. Growth factor active in angiogenesis, vasculogenesis and endothelial cell growth. Induces endothelial cell proliferation, promotes cell migration, inhibits apoptosis and induces permeabilization of blood vessels. Binds to the FLT1/VEGFR1 and KDR/VEGFR2 receptors, heparan sulfate and heparin. Binding to NRP1 receptor initiates a signaling pathway needed for motor neuron axon guidance and cell body migration, including for the caudal migration of facial motor neurons from rhombomere 4 to rhombomere 6 during embryonic development. Also binds the DEAR/FBXW7-AS1 receptor. The protein is Vascular endothelial growth factor A (VEGFA) of Sus scrofa (Pig).